The following is a 357-amino-acid chain: Homoserine kinase (357 aa).

K133 is covalently cross-linked (Glycyl lysine isopeptide (Lys-Gly) (interchain with G-Cter in ubiquitin)).

This sequence belongs to the GHMP kinase family. Homoserine kinase subfamily. As to quaternary structure, homodimer.

It carries out the reaction L-homoserine + ATP = O-phospho-L-homoserine + ADP + H(+). The protein operates within amino-acid biosynthesis; L-threonine biosynthesis; L-threonine from L-aspartate: step 4/5. In terms of biological role, commits homoserine to the threonine biosynthesis pathway by catalyzing its O-phosphorylation. This is Homoserine kinase (THR1) from Saccharomyces cerevisiae (strain ATCC 204508 / S288c) (Baker's yeast).